We begin with the raw amino-acid sequence, 333 residues long: Homeobox protein Hox-A1 (333 aa).

Residues 61–82 (ITSPHHHHHHHHHPQPATYQTS) form a disordered region. Residues 64–74 (PHHHHHHHHHP) show a composition bias toward basic residues. An interaction with OGT region spans residues 74–202 (PQPATYQTSG…PASETSSPAQ (129 aa)). O-linked (GlcNAc) threonine glycosylation is present at T152. Residues 203–208 (TFDWMK) carry the Antp-type hexapeptide motif. The segment at residues 227–286 (QPNAVRTNFTTKQLTELEKEFHFNKYLTRARSEIAASLQLNETQVKIWFQNRRMKQKKRE) is a DNA-binding region (homeobox). A disordered region spans residues 279–333 (RMKQKKREKEGLLPMSPATPPGSDEKTEESSEKSSSSPSAPSPASSTSDTLTTSH). Basic and acidic residues predominate over residues 301–310 (SDEKTEESSE). Over residues 311–333 (KSSSSPSAPSPASSTSDTLTTSH) the composition is skewed to low complexity.

It belongs to the Antp homeobox family. Labial subfamily. In terms of assembly, interacts with OGT (via TPR repeats domain); the interaction takes place mainly in the nucleus. Forms a DNA-binding heterodimer with transcription factor PBX1. Post-translationally, glycosylated by OGT.

It is found in the nucleus. Its function is as follows. Sequence-specific transcription factor. Regulates multiple developmental processes including brainstem, inner and outer ear, abducens nerve and cardiovascular development and morphogenesis as well as cognition and behavior. Also part of a developmental regulatory system that provides cells with specific positional identities on the anterior-posterior axis. Acts on the anterior body structures. Seems to act in the maintenance and/or generation of hindbrain segments. Activates transcription in the presence of PBX1A and PKNOX1. The chain is Homeobox protein Hox-A1 (Hoxa1) from Rattus norvegicus (Rat).